The primary structure comprises 140 residues: ATP synthase epsilon chain (140 aa).

It belongs to the ATPase epsilon chain family. In terms of assembly, F-type ATPases have 2 components, CF(1) - the catalytic core - and CF(0) - the membrane proton channel. CF(1) has five subunits: alpha(3), beta(3), gamma(1), delta(1), epsilon(1). CF(0) has three main subunits: a, b and c.

It is found in the cell inner membrane. In terms of biological role, produces ATP from ADP in the presence of a proton gradient across the membrane. The chain is ATP synthase epsilon chain from Legionella pneumophila (strain Paris).